Reading from the N-terminus, the 381-residue chain is ATP-dependent (S)-NAD(P)H-hydrate dehydratase (381 aa).

The 293-residue stretch at 84-376 (AEAVVRRITP…EFLGKSLEDI (293 aa)) folds into the YjeF C-terminal domain. Residues Gly197 and 250-256 (NVYEYKR) contribute to the (6S)-NADPHX site. Residues 290 to 294 (KGKAD) and 309 to 318 (GSPRRCGGQG) each bind ATP. Asp319 provides a ligand contact to (6S)-NADPHX.

Belongs to the NnrD/CARKD family. It depends on Mg(2+) as a cofactor.

The catalysed reaction is (6S)-NADHX + ATP = ADP + phosphate + NADH + H(+). It catalyses the reaction (6S)-NADPHX + ATP = ADP + phosphate + NADPH + H(+). In terms of biological role, catalyzes the dehydration of the S-form of NAD(P)HX at the expense of ATP, which is converted to ADP. Together with NAD(P)HX epimerase, which catalyzes the epimerization of the S- and R-forms, the enzyme allows the repair of both epimers of NAD(P)HX, a damaged form of NAD(P)H that is a result of enzymatic or heat-dependent hydration. This Sorghum bicolor (Sorghum) protein is ATP-dependent (S)-NAD(P)H-hydrate dehydratase.